A 325-amino-acid polypeptide reads, in one-letter code: Glyoxylate/hydroxypyruvate reductase B (325 aa).

Active-site residues include Arg-237 and Glu-266. Catalysis depends on His-285, which acts as the Proton donor.

This sequence belongs to the D-isomer specific 2-hydroxyacid dehydrogenase family. GhrB subfamily. Homodimer.

It localises to the cytoplasm. It catalyses the reaction glycolate + NADP(+) = glyoxylate + NADPH + H(+). It carries out the reaction (R)-glycerate + NAD(+) = 3-hydroxypyruvate + NADH + H(+). The catalysed reaction is (R)-glycerate + NADP(+) = 3-hydroxypyruvate + NADPH + H(+). Functionally, catalyzes the NADPH-dependent reduction of glyoxylate and hydroxypyruvate into glycolate and glycerate, respectively. This is Glyoxylate/hydroxypyruvate reductase B from Serratia proteamaculans (strain 568).